A 465-amino-acid chain; its full sequence is Ribosomal oxygenase 2 (465 aa).

Residues 139-271 (QPQRFKDELW…NSWGDFLLDT (133 aa)) enclose the JmjC domain. Fe cation-binding residues include H179, D181, and H240. S309 carries the post-translational modification Phosphoserine.

Belongs to the ROX family. MINA53 subfamily. Fe(2+) serves as cofactor. Expressed in liver, skeletal muscle, heart, pancreas, and placenta. Not detected in brain, lung or kidney. Expressed in several lung cancer tissues, but is barely detected in the adjacent non-cancerous tissues. Also highly expressed in several esophageal squamous cell carcinoma (ESCC), and colon cancer tissues, and in various cancer cell lines.

It localises to the nucleus. The protein localises to the nucleolus. The enzyme catalyses L-histidyl-[protein] + 2-oxoglutarate + O2 = (3S)-3-hydroxy-L-histidyl-[protein] + succinate + CO2. It catalyses the reaction L-histidyl-[ribosomal protein uL15] + 2-oxoglutarate + O2 = (3S)-3-hydroxy-L-histidyl-[ribosomal protein uL15] + succinate + CO2. Oxygenase that can act as both a histone lysine demethylase and a ribosomal histidine hydroxylase. Is involved in the demethylation of trimethylated 'Lys-9' on histone H3 (H3K9me3), leading to an increase in ribosomal RNA expression. Also catalyzes the hydroxylation of 60S ribosomal protein L27a on 'His-39'. May play an important role in cell growth and survival. May be involved in ribosome biogenesis, most likely during the assembly process of pre-ribosomal particles. The protein is Ribosomal oxygenase 2 of Homo sapiens (Human).